Reading from the N-terminus, the 158-residue chain is Transcription elongation factor GreA (158 aa).

A coiled-coil region spans residues Ala47–Asp74.

Belongs to the GreA/GreB family.

Its function is as follows. Necessary for efficient RNA polymerase transcription elongation past template-encoded arresting sites. The arresting sites in DNA have the property of trapping a certain fraction of elongating RNA polymerases that pass through, resulting in locked ternary complexes. Cleavage of the nascent transcript by cleavage factors such as GreA or GreB allows the resumption of elongation from the new 3'terminus. GreA releases sequences of 2 to 3 nucleotides. This is Transcription elongation factor GreA from Rhodopseudomonas palustris (strain ATCC BAA-98 / CGA009).